A 130-amino-acid polypeptide reads, in one-letter code: Large ribosomal subunit protein bL19 (130 aa).

This sequence belongs to the bacterial ribosomal protein bL19 family.

Functionally, this protein is located at the 30S-50S ribosomal subunit interface and may play a role in the structure and function of the aminoacyl-tRNA binding site. The polypeptide is Large ribosomal subunit protein bL19 (Cupriavidus metallidurans (strain ATCC 43123 / DSM 2839 / NBRC 102507 / CH34) (Ralstonia metallidurans)).